The sequence spans 567 residues: Septation ring formation regulator EzrA (567 aa).

The Extracellular segment spans residues 1–2; the sequence is MG. A helical membrane pass occupies residues 3 to 21; it reads MAWIVLLLGAGAIIYNHVY. Topologically, residues 22–567 are cytoplasmic; that stretch reads RKRMYREIDR…LWQEDNSREQ (546 aa). 2 coiled-coil regions span residues 98 to 159 and 251 to 497; these read YRQA…AYRY and HMER…IEQA.

This sequence belongs to the EzrA family.

Its subcellular location is the cell membrane. Negative regulator of FtsZ ring formation; modulates the frequency and position of FtsZ ring formation. Inhibits FtsZ ring formation at polar sites. Interacts either with FtsZ or with one of its binding partners to promote depolymerization. The polypeptide is Septation ring formation regulator EzrA (Geobacillus kaustophilus (strain HTA426)).